The primary structure comprises 282 residues: Transcription repressor OFP18 (282 aa).

Positions 1 to 85 are disordered; it reads MVRKMKLPFL…YSSFSSTSHA (85 aa). Residues 15–35 show a composition bias toward low complexity; it reads SSSSFSSNSSSSSSSWPWPSS. Residues 36–47 show a composition bias toward polar residues; that stretch reads HQQNLKTISSKA. Residues 66–85 show a composition bias toward low complexity; it reads SFSSSPSSSSYSSFSSTSHA. Residues 139 to 199 form the OVATE domain; it reads LSLESNDPYT…FAAFVDLVLN (61 aa).

As to expression, expressed in roots and shoots.

It localises to the nucleus. Functionally, transcriptional repressor that regulates multiple aspects of plant growth and development through the regulation of BEL1-LIKE (BLH) and KNOX TALE (KNAT) homeodomain transcription factors. The chain is Transcription repressor OFP18 (OFP18) from Arabidopsis thaliana (Mouse-ear cress).